Reading from the N-terminus, the 126-residue chain is Glycerol dehydrogenase small subunit (126 aa).

Helical transmembrane passes span 13 to 33, 41 to 61, 67 to 87, and 92 to 112; these read WLTL…VIGG, GSTY…FMLM, AFLY…EVGF, and LLPR…TIPV.

Its subcellular location is the cell membrane. It catalyses the reaction glycerol + A = dihydroxyacetone + AH2. Functionally, catalyzes the oxidation of glycerol to glycerone. Also acts, more slowly, on a number of other polyols including D-sorbitol, D-arabinitol, D-mannitol, meso-erythritol, adonitol and propylene glycol. The polypeptide is Glycerol dehydrogenase small subunit (sldB) (Gluconobacter thailandicus).